The sequence spans 173 residues: Lipoprotein signal peptidase (173 aa).

Transmembrane regions (helical) follow at residues 11 to 31 (FGLI…WIVT), 69 to 89 (TTRW…AFWM), and 93 to 113 (QAKG…GNIV). Residues aspartate 123 and aspartate 142 contribute to the active site. Residues 134-154 (PFMIFNVADACITIGVLLLVA) traverse the membrane as a helical segment.

It belongs to the peptidase A8 family.

It localises to the cell inner membrane. The enzyme catalyses Release of signal peptides from bacterial membrane prolipoproteins. Hydrolyzes -Xaa-Yaa-Zaa-|-(S,diacylglyceryl)Cys-, in which Xaa is hydrophobic (preferably Leu), and Yaa (Ala or Ser) and Zaa (Gly or Ala) have small, neutral side chains.. It functions in the pathway protein modification; lipoprotein biosynthesis (signal peptide cleavage). In terms of biological role, this protein specifically catalyzes the removal of signal peptides from prolipoproteins. The protein is Lipoprotein signal peptidase of Sphingopyxis alaskensis (strain DSM 13593 / LMG 18877 / RB2256) (Sphingomonas alaskensis).